The chain runs to 621 residues: uncharacterized protein (621 aa).

The protein belongs to the chlamydial CPn_0512/CT_425/TC_0708 family.

This is an uncharacterized protein from Chlamydia muridarum (strain MoPn / Nigg).